The chain runs to 215 residues: Cytidylate kinase (215 aa).

ATP is bound at residue 10–18 (GPAASGKGT).

This sequence belongs to the cytidylate kinase family. Type 1 subfamily.

The protein localises to the cytoplasm. The catalysed reaction is CMP + ATP = CDP + ADP. The enzyme catalyses dCMP + ATP = dCDP + ADP. This Bartonella bacilliformis (strain ATCC 35685 / KC583 / Herrer 020/F12,63) protein is Cytidylate kinase.